The primary structure comprises 1264 residues: Box A-binding factor (1264 aa).

The span at 1-11 (MTKTTKPKEKA) shows a compositional bias: basic and acidic residues. 6 disordered regions span residues 1–25 (MTKT…SGLG), 161–200 (TASD…ESVK), 234–253 (LISH…QHQQ), 405–463 (QLHQ…HALS), 523–585 (NQTQ…SAAT), and 599–627 (HNSS…PAFQ). Gly residues predominate over residues 16 to 25 (AVIGSGSGLG). A compositionally biased stretch (low complexity) spans 161-171 (TASDTAATSEA). Polar residues predominate over residues 189–198 (SKAQNDASES). A compositionally biased stretch (basic residues) spans 409-421 (QQHHHQQQLHHHQ). Low complexity-rich tracts occupy residues 422-438 (QQQQ…QQQQ), 447-459 (STSS…PSSS), and 523-554 (NQTQ…QQQQ). Residues 555-564 (QHHHNQHQHH) show a composition bias toward basic residues. Composition is skewed to low complexity over residues 565–585 (NSSS…SAAT) and 599–614 (HNSS…RSSH). Residues 803–827 (CSNCHTTHTSLWRRNPAGEPVCNAC) form a GATA-type zinc finger. Disordered regions lie at residues 841-867 (TMKK…SKSK), 899-1048 (DDMK…SNEN), and 1181-1202 (EEMD…QHGE). Composition is skewed to low complexity over residues 909–950 (PYNS…GSTS) and 985–1007 (QMSP…HSPS). Polar residues predominate over residues 1008 to 1023 (TPTSIFNTPSPTHQLH). 2 stretches are compositionally biased toward low complexity: residues 1024-1048 (NNNN…SNEN) and 1185-1200 (QSQQ…QQQH). Serine 1208 and serine 1210 each carry phosphoserine.

Interacts (via GATA-type Zn-finger domain) with Bfc; this interaction enhances srp binding to the promoter of crq/croquemort.

Its subcellular location is the nucleus. Functionally, may function as a transcriptional activator protein and may play a key role in the organogenesis of the fat body. Binds a sequence element (5'-[TA]GATAA-3') found in the larval promoters of all known alcohol dehydrogenase (ADH) genes. Acts as a homeotic gene downstream of the terminal gap gene HKB to promote morphogenesis and differentiation of anterior and posterior midgut. Together with transcriptional cofactor Bfc directly binds the promoter of phagocytic receptor crq/croquemort to upregulate its expression and stimulate efferocytosis in response to apoptotic cells, including during embryogenesis. The chain is Box A-binding factor (srp) from Drosophila melanogaster (Fruit fly).